Reading from the N-terminus, the 506-residue chain is Trans-cinnamate 4-monooxygenase (506 aa).

A helical transmembrane segment spans residues 3–23; it reads LLLLEKALLGLFAAAVVAIAV. (E)-cinnamate contacts are provided by residues 213-218 and A306; that span reads RSRLAQ. C447 provides a ligand contact to heme.

It belongs to the cytochrome P450 family. Heme serves as cofactor.

It is found in the membrane. It carries out the reaction (E)-cinnamate + reduced [NADPH--hemoprotein reductase] + O2 = (E)-4-coumarate + oxidized [NADPH--hemoprotein reductase] + H2O + H(+). Its pathway is phenylpropanoid metabolism; trans-4-coumarate biosynthesis; trans-4-coumarate from trans-cinnamate: step 1/1. Functionally, catalyzes the first oxidative step of the phenylpropanoid pathway in higher plants by transforming trans-cinnamate into p-coumarate. The compounds formed by this pathway are essential components for lignification, pollination, and defense against ultraviolet light, predators and pathogens. The sequence is that of Trans-cinnamate 4-monooxygenase (CYP73A2) from Ruta graveolens (Common rue).